A 464-amino-acid chain; its full sequence is Leucine-rich repeat-containing protein 34 (464 aa).

Residues 1–48 form a disordered region; sequence MAAQPPRPVGERSMGSSREAARAPARSPAWASTQASTPGAALAVQRES. Over residues 16 to 32 the composition is skewed to low complexity; it reads SSREAARAPARSPAWAS. 2 LRR repeats span residues 295–315 and 323–345; these read SLRY…VYLA and TLEV…LSET.

In terms of assembly, interacts with NPM1 and NCL.

It localises to the nucleus. The protein localises to the nucleolus. The protein resides in the cytoplasm. Its function is as follows. Highly expressed in stem cells where it may be involved in regulation of pluripotency. In embryonic stem cells (ESCs), important for normal expression of the pluripotency regulators POU5F1/OCT4 and KLF4. Also important for expression of the ectodermal marker gene NES and the endodermal marker gene GATA4. Promotes stem cell proliferation in vitro. The polypeptide is Leucine-rich repeat-containing protein 34 (LRRC34) (Homo sapiens (Human)).